The sequence spans 208 residues: Large ribosomal subunit protein bL25 (208 aa).

Belongs to the bacterial ribosomal protein bL25 family. CTC subfamily. As to quaternary structure, part of the 50S ribosomal subunit; part of the 5S rRNA/L5/L18/L25 subcomplex. Contacts the 5S rRNA. Binds to the 5S rRNA independently of L5 and L18.

In terms of biological role, this is one of the proteins that binds to the 5S RNA in the ribosome where it forms part of the central protuberance. This chain is Large ribosomal subunit protein bL25, found in Acidovorax ebreus (strain TPSY) (Diaphorobacter sp. (strain TPSY)).